The chain runs to 816 residues: Protein kinase C-binding protein NELL2 (816 aa).

A signal peptide spans 1-21; sequence MESRVLLRTFCLIFGLGAVWG. 4 N-linked (GlcNAc...) asparagine glycosylation sites follow: N53, N225, N293, and N298. The 165-residue stretch at 64 to 228 folds into the Laminin G-like domain; it reads PRSIKASTAT…AQCPDLNRTC (165 aa). The region spanning 272–331 is the VWFC 1 domain; that stretch reads RTCTMKGTTYREFESWIDGCKNCTCLNGTIQCETLICPNPDCPLKSALAYVDGKCCKECK. The region spanning 397–439 is the EGF-like 1 domain; it reads GYDFCSERHNCMENSICRNLNDRAVCSCRDGFRALREDNAYCE. 3 disulfide bridges follow: C401–C413, C407–C422, and C424–C438. Ca(2+)-binding residues include D440, I441, and E443. The EGF-like 2; calcium-binding domain occupies 440–481; the sequence is DIDECAEGRHYCRENTMCVNTPGSFMCICKTGYIRIDDYSCT. 9 disulfides stabilise this stretch: C444–C457, C451–C466, C468–C480, C486–C499, C493–C508, C510–C521, C525–C535, C529–C541, and C543–C552. The Ca(2+) site is built by N459, T460, and S463. Residues 482-522 enclose the EGF-like 3; calcium-binding domain; it reads EHDECITNQHNCDENALCFNTVGGHNCVCKPGYTGNGTTCK. N517 carries an N-linked (GlcNAc...) asparagine glycan. Residues 523–553 form the EGF-like 4 domain; that stretch reads AFCKDGCRNGGACIAANVCACPQGFTGPSCE. The O-linked (GlcNAc...) threonine glycan is linked to T548. 3 residues coordinate Ca(2+): D555, I556, and E558. One can recognise an EGF-like 5; calcium-binding domain in the interval 555–601; it reads DIDECSDGFVQCDSRANCINLPGWYHCECRDGYHDNGMFSPSGESCE. Cystine bridges form between C559–C572, C566–C581, and C583–C600. N574, L575, and W578 together coordinate Ca(2+). Residues D602, I603, and E605 each coordinate Ca(2+). The EGF-like 6; calcium-binding domain maps to 602 to 637; it reads DIDECGTGRHSCANDTICFNLDGGYDCRCPHGKNCT. Intrachain disulfides connect C606–C619, C613–C628, and C630–C636. N-linked (GlcNAc...) asparagine glycosylation occurs at N615. Ca(2+) contacts are provided by N621, L622, and G625. N-linked (GlcNAc...) asparagine glycosylation is present at N635. VWFC domains lie at 638–693 and 698–756; these read GDCI…PECD and SQCL…PRCV.

Homotrimer. Binds to PRKCB. Interacts with NICOL1; this interaction triggers epididymal differentiation. Interacts (via the EGF domains) with ROBO3 (via Fibronectin type-III 1 domain) with a 3:3 stoichiometry; this interaction promotes oligomerization of ROBO3 resulting in the repulsion of commissural axons in the midline.

It localises to the secreted. Its function is as follows. Plays multiple roles in neural tissues, regulates neuronal proliferation, survival, differentiation, polarization, as well as axon guidance and synaptic functions. Plays an important role in axon development during neuronal differentiation through the MAPK intracellular signaling pathway. Via binding to its receptor ROBO3, plays a role in axon guidance, functioning as a repulsive axon guidance cue that contributes to commissural axon guidance to the midline. Required for neuron survival through the modulation of MAPK signaling pathways too. Involved in the regulation of hypothalamic GNRH secretion and the control of puberty. Epididymal-secreted protein that signals through a ROS1-pathway to regulate the epididymal initial segment (IS) maturation, sperm maturation and male fertility. This chain is Protein kinase C-binding protein NELL2, found in Homo sapiens (Human).